A 53-amino-acid chain; its full sequence is UPF0391 membrane protein Bcep18194_C7021 (53 aa).

2 consecutive transmembrane segments (helical) span residues 5 to 25 and 30 to 50; these read AVIF…GIAA and IAKI…LLGV.

It belongs to the UPF0391 family.

The protein resides in the cell membrane. This Burkholderia lata (strain ATCC 17760 / DSM 23089 / LMG 22485 / NCIMB 9086 / R18194 / 383) protein is UPF0391 membrane protein Bcep18194_C7021.